The primary structure comprises 270 residues: Urease accessory protein UreD (270 aa).

Belongs to the UreD family. UreD, UreF and UreG form a complex that acts as a GTP-hydrolysis-dependent molecular chaperone, activating the urease apoprotein by helping to assemble the nickel containing metallocenter of UreC. The UreE protein probably delivers the nickel.

The protein resides in the cytoplasm. Functionally, required for maturation of urease via the functional incorporation of the urease nickel metallocenter. The sequence is that of Urease accessory protein UreD from Actinobacillus pleuropneumoniae serotype 3 (strain JL03).